Consider the following 404-residue polypeptide: Tryptophan synthase beta chain (404 aa).

Lys-90 is modified (N6-(pyridoxal phosphate)lysine).

The protein belongs to the TrpB family. Tetramer of two alpha and two beta chains. Pyridoxal 5'-phosphate is required as a cofactor.

It carries out the reaction (1S,2R)-1-C-(indol-3-yl)glycerol 3-phosphate + L-serine = D-glyceraldehyde 3-phosphate + L-tryptophan + H2O. It functions in the pathway amino-acid biosynthesis; L-tryptophan biosynthesis; L-tryptophan from chorismate: step 5/5. Its function is as follows. The beta subunit is responsible for the synthesis of L-tryptophan from indole and L-serine. This is Tryptophan synthase beta chain from Geobacillus thermodenitrificans (strain NG80-2).